A 209-amino-acid chain; its full sequence is Holliday junction branch migration complex subunit RuvA (209 aa).

Residues 1–70 are domain I; it reads MINYLKGKTT…EDQQILYGFS (70 aa). Residues 71-149 are domain II; the sequence is TDSERDLFRQ…QWEQAIALKT (79 aa). The tract at residues 150-160 is flexible linker; it reads PVSVGVPSREI. The interval 160 to 209 is domain III; the sequence is ILEEVEMTLLALGYTDEEIDQAISAISQDNLLLKNPHVEEWLKSAIAWLS.

It belongs to the RuvA family. Homotetramer. Forms an RuvA(8)-RuvB(12)-Holliday junction (HJ) complex. HJ DNA is sandwiched between 2 RuvA tetramers; dsDNA enters through RuvA and exits via RuvB. An RuvB hexamer assembles on each DNA strand where it exits the tetramer. Each RuvB hexamer is contacted by two RuvA subunits (via domain III) on 2 adjacent RuvB subunits; this complex drives branch migration. In the full resolvosome a probable DNA-RuvA(4)-RuvB(12)-RuvC(2) complex forms which resolves the HJ.

It is found in the cytoplasm. Its function is as follows. The RuvA-RuvB-RuvC complex processes Holliday junction (HJ) DNA during genetic recombination and DNA repair, while the RuvA-RuvB complex plays an important role in the rescue of blocked DNA replication forks via replication fork reversal (RFR). RuvA specifically binds to HJ cruciform DNA, conferring on it an open structure. The RuvB hexamer acts as an ATP-dependent pump, pulling dsDNA into and through the RuvAB complex. HJ branch migration allows RuvC to scan DNA until it finds its consensus sequence, where it cleaves and resolves the cruciform DNA. The sequence is that of Holliday junction branch migration complex subunit RuvA from Gloeothece citriformis (strain PCC 7424) (Cyanothece sp. (strain PCC 7424)).